Here is a 130-residue protein sequence, read N- to C-terminus: Methylglyoxal synthase (130 aa).

In terms of domain architecture, MGS-like spans Met1–Pro130. Residues His12, Lys16, Thr38–Thr41, and Ser58–Gly59 each bind substrate. Asp64 functions as the Proton donor/acceptor in the catalytic mechanism. His91 contacts substrate.

It belongs to the methylglyoxal synthase family.

The catalysed reaction is dihydroxyacetone phosphate = methylglyoxal + phosphate. Its function is as follows. Catalyzes the formation of methylglyoxal from dihydroxyacetone phosphate. The polypeptide is Methylglyoxal synthase (Cupriavidus pinatubonensis (strain JMP 134 / LMG 1197) (Cupriavidus necator (strain JMP 134))).